Consider the following 238-residue polypeptide: uncharacterized protein (238 aa).

The first 19 residues, 1-19, serve as a signal peptide directing secretion; it reads MKINLFFVFLFELLHFVAA. Residues 20-197 are Lumenal-facing; it reads YSCEGDESAA…LALYGHLSQK (178 aa). Residues 198 to 216 traverse the membrane as a helical segment; it reads YTPLGMNVAIFGISAYIMY. The Cytoplasmic segment spans residues 217-238; the sequence is RSSKKAKQKQAAAAAAAAAKKK.

The protein resides in the endoplasmic reticulum membrane. This is an uncharacterized protein from Schizosaccharomyces pombe (strain 972 / ATCC 24843) (Fission yeast).